The chain runs to 1069 residues: Acyl-CoA dehydrogenase family member 10 (1069 aa).

Lys413 is subject to N6-succinyllysine. At Lys427 the chain carries N6-acetyllysine; alternate. Residue Lys427 is modified to N6-succinyllysine; alternate. Residues Phe792–Ser802, Ser828, Arg943, Gln1013, and Glu1044 contribute to the FAD site. Lys1052 carries the post-translational modification N6-acetyllysine; alternate. N6-succinyllysine; alternate is present on Lys1052.

It belongs to the acyl-CoA dehydrogenase family. FAD is required as a cofactor.

It catalyses the reaction a 2,3-saturated acyl-CoA + A = a 2,3-dehydroacyl-CoA + AH2. Acyl-CoA dehydrogenase only active with R- and S-2-methyl-C15-CoA. This is Acyl-CoA dehydrogenase family member 10 (Acad10) from Mus musculus (Mouse).